The chain runs to 519 residues: Cell adhesion molecule CEACAM1 (519 aa).

Residues 1–34 (MELASARLLRGQIPWRGLLLTASLLTYWSPLTTA) form the signal peptide. Pyrrolidone carboxylic acid is present on Q35. Topologically, residues 35–425 (QVTVDAVPPN…QGNSGLSEGA (391 aa)) are extracellular. The segment at 39-142 (DAVPPNVVEE…QTSVQFRVYP (104 aa)) is required for homophilic binding. The 99-residue stretch at 42-140 (PPNVVEEKSV…PIQTSVQFRV (99 aa)) folds into the Ig-like V-type domain. 14 N-linked (GlcNAc...) asparagine glycosylation sites follow: N87, N104, N113, N148, N152, N173, N197, N224, N256, N288, N292, N302, N315, and N331. 3 consecutive Ig-like C2-type domains span residues 147–232 (PNVT…FNLD), 237–317 (PDAP…KNIT), and 325–403 (PSIQ…FRIS). Cysteines 167 and 215 form a disulfide. Residues C259 and C299 are joined by a disulfide bond. A disulfide bridge links C344 with C392. N374 carries N-linked (GlcNAc...) asparagine; atypical glycosylation. The helical transmembrane segment at 426–446 (IAGIVIGSVAGVALIAALAYF) threads the bilayer. Residues 445 to 457 (YFLYSRKTGGGSD) form an interaction with calmodulin region. The Cytoplasmic segment spans residues 447 to 519 (LYSRKTGGGS…ETVYSVVKKK (73 aa)). The interval 447 to 519 (LYSRKTGGGS…ETVYSVVKKK (73 aa)) is interaction with FLNA. Positions 455 to 519 (GSDHRDLTEH…ETVYSVVKKK (65 aa)) are disordered. Basic and acidic residues predominate over residues 456–466 (SDHRDLTEHKP). The interval 484–519 (DDVSYSVLNFNAQQSKRPTSASSSPTETVYSVVKKK) is required for interaction with PTPN11 and PTPN6 and for control of phosphorylation level. Y488 is subject to Phosphotyrosine; by SRC, LCK, INSR and EGFR. A compositionally biased stretch (polar residues) spans 489-512 (SVLNFNAQQSKRPTSASSSPTETV). Position 503 is a phosphoserine (S503). Residue Y513 is modified to Phosphotyrosine; by INSR, SRC and LCK. Residues 513–516 (YSVV) form an essential for interaction with PTPN11 and PTPN6 region.

It belongs to the immunoglobulin superfamily. CEA family. Monomer. Oligomer. Heterodimer. Homodimer. Cis-dimer/oligomer (via Ig-like C2-type and/or via cytoplasmic domains); induced by trans-homophilic cell adhesion through an allosteric mechanism transmitted by the Ig-like V-type domain, and is regulated by intracellular calcium and calmodulin. Interacts (via cytoplasmic domain) with calmodulin in a calcium dependent manner; reduces homophilic cell adhesion through dissociation of dimer. Isoform 1 interacts (via cytoplasmic domain) with PTPN11 (preferentially) and PTPN6; cis-homodimer form is preferred; this interaction is decreased by formation of isoform 1 / isoform 2 cis-heterodimers and is dependent on the monomer/dimer equilibrium; this interaction is phosphorylation-dependent. Isoform 1 interacts with LYN. Isoform 1 interacts (via cytoplasmic domain) with SRC (via SH2 domain); this interaction is regulated by trans-homophilic cell adhesion. Isoform 1 interacts (via cytoplasmic domain) with LCK; mediates phosphorylation at Tyr-488 and Tyr-513 resulting in PTPN6 association. Isoform 1 interacts with PTPN6; this interaction is phosphorylation-dependent and causes a profound decrease in TCR stimulation-induced CD247 and ZAP70 phosphorylation. Isoform 1 interacts with TCR/CD3 complex through TCR beta chain and CD3E; colocalizes at the cell surface and upon stimulation of the TCR/CD3 complex recruits PTPN6 in the TCR/CD3 complex, resulting in dephosphorylation of CD247 and ZAP70. Isoform 1 interacts (via cytoplasmic domain) with SHC1 (via SH2 domain); SHC1 mediates interaction with INSR or EGFR in a Ser-503 phosphorylation-dependent manner. Isoform 1 interacts with EGFR; the interaction is indirect. Isoform 1 interacts with CSF3R; down-regulates the CSF3R-STAT3 pathway through recruitment of PTPN6 that dephosphorylates CSF3R. Isoform 1 (phosphorylated form) interacts with TLR4 and SYK; recruits PTPN6 that dephosphorylates SYK, reducing the production of reactive oxygen species (ROS) and lysosome disruption, leading to a reduction of the inflammasome activity. Isoform 1 interacts with FLNA; inhibits cell migration and cell scattering by interfering with the interaction of FLNA with RALA. Isoform 1 interacts (via cytoplasmic domain) with PXN; the interaction is phosphotyrosyl-dependent. Isoform 1 interacts with KLRK1; recruits PTPN6 that dephosphorylates VAV1. Isoform 1 interacts with CEACAM8. Isoform 1 interacts with FASN; this interaction is insulin and phosphorylation-dependent; reduces fatty-acid synthase activity. Interacts (via Ig-like V-type) with HAVCR2 (via Ig-like V-type); facilitates the maturation and cell surface expression of HAVCR2 thereby regulating T-cell tolerance induction. Isoform 2 interacts (via the cytoplasmic domain) with ANXA2; this interaction is regulated by phosphorylation and appears in the AIIt complex. Interacts (via Lewis X moieties) with CD209 (via C-type lectin domain); this interaction is regulated by the glycosylation pattern of CEACAM1 on cell types and regulates contact between dendritic cells and neutrophils. In terms of processing, phosphorylated on serine and tyrosine. Isoform 1 is phosphorylated on tyrosine by Src family kinases like SRC and LCK and by receptor like CSF3R, EGFR and INSR upon stimulation. Phosphorylated at Ser-503; mediates activity. Phosphorylated at Tyr-488; regulates activity. Phosphorylated at Tyr-488 by EGFR and INSR upon stimulation; this phosphorylation is Ser-503-phosphorylation-dependent; mediates cellular internalization; increases interaction with FASN. Phosphorylated at Tyr-488 and Tyr-513 by LCK; mediates PTPN6 association and is regulated by homophilic ligation of CEACAM1 in the absence of T-cell activation. Phosphorylated at Tyr-513; mediates interaction with PTPN11. Phosphorylated on serine and threonine. In terms of tissue distribution, expressed in epithelia, vessel endothelia, leukocytes and platelets. Isoform 1 and isoform 2 are highly expressed in liver and intestine, moderately in lung, and weakly in muscle, kidney, and spleen. Expressed in granulocytes, lymphocytes, granulocytes, B cells, and T-cells.

The protein resides in the cell membrane. It is found in the lateral cell membrane. Its subcellular location is the apical cell membrane. The protein localises to the basal cell membrane. It localises to the cell junction. The protein resides in the adherens junction. It is found in the cytoplasmic vesicle. Its subcellular location is the secretory vesicle. The protein localises to the cell projection. It localises to the microvillus membrane. Its function is as follows. Cell adhesion protein that mediates homophilic cell adhesion in a calcium-independent manner. Plays a role as coinhibitory receptor in immune response, insulin action and also functions as an activator during angiogenesis. Its coinhibitory receptor function is phosphorylation- and PTPN6 -dependent, which in turn, suppress signal transduction of associated receptors by dephosphorylation of their downstream effectors. Plays a role in immune response, of T-cells, natural killer (NK) and neutrophils. Upon TCR/CD3 complex stimulation, inhibits TCR-mediated cytotoxicity by blocking granule exocytosis by mediating homophilic binding to adjacent cells, allowing interaction with and phosphorylation by LCK and interaction with the TCR/CD3 complex which recruits PTPN6 resulting in dephosphorylation of CD247 and ZAP70. Also inhibits T-cell proliferation and cytokine production through inhibition of JNK cascade and plays a crucial role in regulating autoimmunity and anti-tumor immunity by inhibiting T-cell through its interaction with HAVCR2. Upon natural killer (NK) cells activation, inhibit KLRK1-mediated cytolysis of CEACAM1-bearing tumor cells by trans-homophilic interactions with CEACAM1 on the target cell and lead to cis-interaction between CEACAM1 and KLRK1, allowing PTPN6 recruitment and then VAV1 dephosphorylation. Upon neutrophils activation negatively regulates IL1B production by recruiting PTPN6 to a SYK-TLR4-CEACAM1 complex, that dephosphorylates SYK, reducing the production of reactive oxygen species (ROS) and lysosome disruption, which in turn, reduces the activity of the inflammasome. Down-regulates neutrophil production by acting as a coinhibitory receptor for CSF3R by downregulating the CSF3R-STAT3 pathway through recruitment of PTPN6 that dephosphorylates CSF3R. Also regulates insulin action by promoting INS clearance and regulating lipogenesis in liver through regulating insulin signaling. Upon INS stimulation, undergoes phosphorylation by INSR leading to INS clearance by increasing receptor-mediated insulin endocytosis. This inernalization promotes interaction with FASN leading to receptor-mediated insulin degradation and to reduction of FASN activity leading to negative regulation of fatty acid synthesis. INSR-mediated phosphorylation also provokes a down-regulation of cell proliferation through SHC1 interaction resulting in decrease coupling of SHC1 to the MAPK3/ERK1-MAPK1/ERK2 and phosphatidylinositol 3-kinase pathways. Functions as activator in angiogenesis by promoting blood vessel remodeling through endothelial cell differentiation and migration and in arteriogenesis by increasing the number of collateral arteries and collateral vessel calibers after ischemia. Also regulates vascular permeability through the VEGFR2 signaling pathway resulting in control of nitric oxide production. Down-regulates cell growth in response to EGF through its interaction with SHC1 that mediates interaction with EGFR resulting in decrease coupling of SHC1 to the MAPK3/ERK1-MAPK1/ERK2 pathway. Negatively regulates platelet aggregation by decreasing platelet adhesion on type I collagen through the GPVI-FcRgamma complex. Inhibits cell migration and cell scattering through interaction with FLNA; interferes with the interaction of FLNA with RALA. Mediates bile acid transport activity in a phosphorylation dependent manner. Negatively regulates osteoclastogenesis. In terms of biological role, cell adhesion proteins that mediates homophilic cell adhesion in a calcium-independent manner. Promotes populations of T-cells regulating IgA production and secretion associated with control of the commensal microbiota and resistance to enteropathogens. The protein is Cell adhesion molecule CEACAM1 of Rattus norvegicus (Rat).